Consider the following 97-residue polypeptide: Acylphosphatase-2 (97 aa).

Position 2 is an N-acetylalanine (A2). One can recognise an Acylphosphatase-like domain in the interval 7–97 (SVDYEVFGTV…LEYSNFSIRY (91 aa)). Active-site residues include R22 and N40. S91 carries the post-translational modification Phosphoserine.

It belongs to the acylphosphatase family.

The catalysed reaction is an acyl phosphate + H2O = a carboxylate + phosphate + H(+). In terms of biological role, its physiological role is not yet clear. The chain is Acylphosphatase-2 (Acyp2) from Rattus norvegicus (Rat).